The following is a 539-amino-acid chain: MADPDLSSPLIHHQSSDQPEVVISIADDDDDESGLNLLPAVVDPRVSRGFEFDHLNPYGFLSESEPPVLGPTTVDPFRNNTPGVSGLYEAIKLVICLPIALIRLVLFAASLAVGYLATKLALAGWKDKENPMPLWRCRIMWITRICTRCILFSFGYQWIRRKGKPARREIAPIVVSNHVSYIEPIFYFYELSPTIVASESHDSLPFVGTIIRAMQVIYVNRFSQTSRKNAVHEIKRKASCDRFPRLLLFPEGTTTNGKVLISFQLGAFIPGYPIQPVVVRYPHVHFDQSWGNISLLTLMFRMFTQFHNFMEVEYLPVIYPSEKQKQNAVRLSQKTSHAIATSLNVVQTSHSFADLMLLNKATELKLENPSNYMVEMARVESLFHVSSLEATRFLDTFVSMIPDSSGRVRLHDFLRGLKLKPCPLSKRIFEFIDVEKVGSITFKQFLFASGHVLTQPLFKQTCELAFSHCDADGDGYITIQELGEALKNTIPNLNKDEIRGMYHLLDDDQDQRISQNDLLSCLRRNPLLIAIFAPDLAPT.

Residues Leu-93–Val-113 traverse the membrane as a helical segment. An HXXXXD motif motif is present at residues His-178–Glu-183. EF-hand domains lie at Lys-426–Gln-455, Leu-457–Asn-492, and Leu-493–Leu-528. Ca(2+) is bound by residues Asp-470, Asp-472, Asp-474, Tyr-476, Glu-481, Asp-506, Asp-508, Asp-510, Arg-512, and Asp-517.

Belongs to the 1-acyl-sn-glycerol-3-phosphate acyltransferase family.

The protein resides in the golgi apparatus membrane. It is found in the late endosome membrane. The catalysed reaction is a 1-acyl-sn-glycero-3-phosphoethanolamine + an acyl-CoA = a 1,2-diacyl-sn-glycero-3-phosphoethanolamine + CoA. The enzyme catalyses a 1-acyl-sn-glycero-3-phosphocholine + an acyl-CoA = a 1,2-diacyl-sn-glycero-3-phosphocholine + CoA. It carries out the reaction a 1-acyl-sn-glycero-3-phospho-L-serine + an acyl-CoA = a 1,2-diacyl-sn-glycero-3-phospho-L-serine + CoA. The protein operates within lipid metabolism; phospholipid metabolism. Possesses acyl-CoA-dependent lysophospholipid acyltransferase activity with a subset of lysophospholipids as substrates. Exhibits strong acylation activity on lysophosphatidylethanolamine (LPE), and lower activity on lysophosphatidylcholine (LPC) and lysophosphatidylserine (LPS). Exhibits acylation activity on both LPE and LPC. Has a preference for 18:1-LPE over 16:0-LPE as acceptor. Palmitoyl-CoA (16:0-CoA) is a better acyl donor than oleoyl-CoA (18:1-CoA). Among several different acyl-CoA species the best acyl donor is eicosanoyl-CoA (20:0-CoA). Activity is calcium-independent. Its activity is essential for maintaining adequate levels of phosphatidylethanolamine (PE), LPE and LPC in the cells, which is crucial for plant growth regulation. In Arabidopsis thaliana (Mouse-ear cress), this protein is Lysophospholipid acyltransferase LPEAT2.